Reading from the N-terminus, the 172-residue chain is NADH-quinone oxidoreductase subunit B (172 aa).

Residues Cys46, Cys47, Cys111, and Cys141 each contribute to the [4Fe-4S] cluster site.

The protein belongs to the complex I 20 kDa subunit family. In terms of assembly, NDH-1 is composed of 14 different subunits. Subunits NuoB, C, D, E, F, and G constitute the peripheral sector of the complex. [4Fe-4S] cluster serves as cofactor.

Its subcellular location is the cell membrane. It catalyses the reaction a quinone + NADH + 5 H(+)(in) = a quinol + NAD(+) + 4 H(+)(out). NDH-1 shuttles electrons from NADH, via FMN and iron-sulfur (Fe-S) centers, to quinones in the respiratory chain. The immediate electron acceptor for the enzyme in this species is believed to be a menaquinone. Couples the redox reaction to proton translocation (for every two electrons transferred, four hydrogen ions are translocated across the cytoplasmic membrane), and thus conserves the redox energy in a proton gradient. In Bacillus cytotoxicus (strain DSM 22905 / CIP 110041 / 391-98 / NVH 391-98), this protein is NADH-quinone oxidoreductase subunit B.